The primary structure comprises 545 residues: Baeyer-Villiger monooxygenase (545 aa).

Residues Phe-24, Asp-45, Trp-54, Asp-65, Tyr-71, and Val-118 each contribute to the FAD site.

Belongs to the FAD-binding monooxygenase family. It depends on FAD as a cofactor.

In terms of biological role, catalyzes a Baeyer-Villiger oxidation reaction, i.e. the insertion of an oxygen atom into a carbon-carbon bond adjacent to a carbonyl, which converts ketones to esters or lactones using NADPH as an electron donor. Besides cycloalkanones, can use cyclic alpha,beta-unsaturated ketones as substrates, leading to conjugated ene-lactones. Can also act on methylated cycloalkanones and methylated cycloalkenones with high enantioselectivity in some cases. The polypeptide is Baeyer-Villiger monooxygenase (Pseudooceanicola batsensis (strain ATCC BAA-863 / DSM 15984 / KCTC 12145 / HTCC2597) (Oceanicola batsensis)).